Here is a 22-residue protein sequence, read N- to C-terminus: NADH-ubiquinone oxidoreductase 16 kDa subunit (22 aa).

As to quaternary structure, complex I is composed of about 45 different subunits.

It is found in the mitochondrion inner membrane. It catalyses the reaction a ubiquinone + NADH + 5 H(+)(in) = a ubiquinol + NAD(+) + 4 H(+)(out). Its function is as follows. Transfer of electrons from NADH to the respiratory chain. The immediate electron acceptor for the enzyme is believed to be ubiquinone. This chain is NADH-ubiquinone oxidoreductase 16 kDa subunit, found in Solanum tuberosum (Potato).